The chain runs to 165 residues: 6,7-dimethyl-8-ribityllumazine synthase (165 aa).

5-amino-6-(D-ribitylamino)uracil is bound by residues phenylalanine 22, 56–58, and 80–82; these read SME and AVI. 85-86 contributes to the (2S)-2-hydroxy-3-oxobutyl phosphate binding site; that stretch reads ET. The active-site Proton donor is histidine 88. Phenylalanine 113 serves as a coordination point for 5-amino-6-(D-ribitylamino)uracil. A (2S)-2-hydroxy-3-oxobutyl phosphate-binding site is contributed by arginine 127.

The protein belongs to the DMRL synthase family.

The catalysed reaction is (2S)-2-hydroxy-3-oxobutyl phosphate + 5-amino-6-(D-ribitylamino)uracil = 6,7-dimethyl-8-(1-D-ribityl)lumazine + phosphate + 2 H2O + H(+). It participates in cofactor biosynthesis; riboflavin biosynthesis; riboflavin from 2-hydroxy-3-oxobutyl phosphate and 5-amino-6-(D-ribitylamino)uracil: step 1/2. In terms of biological role, catalyzes the formation of 6,7-dimethyl-8-ribityllumazine by condensation of 5-amino-6-(D-ribitylamino)uracil with 3,4-dihydroxy-2-butanone 4-phosphate. This is the penultimate step in the biosynthesis of riboflavin. In Thermotoga sp. (strain RQ2), this protein is 6,7-dimethyl-8-ribityllumazine synthase.